A 238-amino-acid chain; its full sequence is Ribonuclease PH (238 aa).

Phosphate is bound by residues R86 and 124-126 (GTR).

The protein belongs to the RNase PH family. In terms of assembly, homohexameric ring arranged as a trimer of dimers.

It catalyses the reaction tRNA(n+1) + phosphate = tRNA(n) + a ribonucleoside 5'-diphosphate. Functionally, phosphorolytic 3'-5' exoribonuclease that plays an important role in tRNA 3'-end maturation. Removes nucleotide residues following the 3'-CCA terminus of tRNAs; can also add nucleotides to the ends of RNA molecules by using nucleoside diphosphates as substrates, but this may not be physiologically important. Probably plays a role in initiation of 16S rRNA degradation (leading to ribosome degradation) during starvation. This is Ribonuclease PH from Azorhizobium caulinodans (strain ATCC 43989 / DSM 5975 / JCM 20966 / LMG 6465 / NBRC 14845 / NCIMB 13405 / ORS 571).